The following is a 72-amino-acid chain: SRY-related protein MG43 (72 aa).

A DNA-binding region (HMG box) is located at residues 1–69; sequence VKRPMNAFMV…KHMADYPDYK (69 aa).

It localises to the nucleus. This is SRY-related protein MG43 from Tarentola mauritanica (Common wall gecko).